An 84-amino-acid polypeptide reads, in one-letter code: U8-theraphotoxin-Hhn1c 1 (84 aa).

The N-terminal stretch at Met-1–Cys-21 is a signal peptide. 5 disulfide bridges follow: Cys-23/Cys-35, Cys-29/Cys-44, Cys-34/Cys-67, Cys-54/Cys-75, and Cys-69/Cys-81.

Belongs to the AVIT (prokineticin) family. As to expression, expressed by the venom gland.

The protein localises to the secreted. The polypeptide is U8-theraphotoxin-Hhn1c 1 (Cyriopagopus hainanus (Chinese bird spider)).